The sequence spans 470 residues: Arginine ADP-riboxanase OspC1 (470 aa).

Positions 138, 139, 140, 144, 157, 167, 183, 201, 206, 226, and 320 each coordinate NAD(+). E320 is a catalytic residue. 3 ANK repeats span residues 363–392, 399–431, and 438–467; these read IALQALFLSITNQKEDVALYILSNFEITRQ, HELYDIEYLLSAHNSSCKVLEYFINKGLVDVNT, and SGDCMLDNAIKYENAEMIKLLLKYGATSDN.

This sequence belongs to the OspC family. Interacts with host calmodulin (CALM1, CALM2 and/or CALM3); specifically interacts with the apo form of calmodulin, preventing calcium-binding.

The protein resides in the secreted. Its subcellular location is the host nucleus. The enzyme catalyses L-arginyl-[protein] + NAD(+) = ADP-riboxanated L-argininyl-[protein] + nicotinamide + NH4(+) + H(+). ADP-riboxanase effector that mediates arginine ADP-riboxanation of host caspases. ADP-riboxanation of host apoptotic caspases (CASP3, CASP8 and CASP9) prevents their activation, thereby inhibiting host cell extrinsic and intrinsic apoptosis. Does not catalyze ADP-riboxanation of host CASP4/CASP11. Independently of its ADP-riboxanase activity, acts as an inhibitor of calcium signaling by inhibiting host calmodulin, preventing activation of the JAK-STAT signaling pathway in response to interferon-beta. Mechanistically, acts by binding to the apo form of calmodulin, preventing calcium-binding and ability to activate host CaMK2 (CAMKII), which is required to stimulate the JAK-STAT signaling pathway in response to interferon-beta. The polypeptide is Arginine ADP-riboxanase OspC1 (Shigella flexneri).